The sequence spans 133 residues: Ycf54-like protein (133 aa).

It belongs to the ycf54 family.

In Synechocystis sp. (strain ATCC 27184 / PCC 6803 / Kazusa), this protein is Ycf54-like protein.